A 1091-amino-acid polypeptide reads, in one-letter code: Leucine--tRNA ligase, cytoplasmic (1091 aa).

The short motif at 53–63 is the 'HIGH' region element; it reads PYMNGYLHIGH. A 'KMSKS' region motif is present at residues 715-719; sequence KMSKS. Lysine 718 lines the ATP pocket.

The protein belongs to the class-I aminoacyl-tRNA synthetase family.

It localises to the cytoplasm. The protein localises to the cytosol. It catalyses the reaction tRNA(Leu) + L-leucine + ATP = L-leucyl-tRNA(Leu) + AMP + diphosphate. Functionally, catalyzes the specific attachment of an amino acid to its cognate tRNA in a two step reaction: the amino acid (AA) is first activated by ATP to form AA-AMP and then transferred to the acceptor end of the tRNA. This is Leucine--tRNA ligase, cytoplasmic from Arabidopsis thaliana (Mouse-ear cress).